A 189-amino-acid chain; its full sequence is Elongation factor P (189 aa).

This sequence belongs to the elongation factor P family.

It is found in the cytoplasm. It functions in the pathway protein biosynthesis; polypeptide chain elongation. Its function is as follows. Involved in peptide bond synthesis. Stimulates efficient translation and peptide-bond synthesis on native or reconstituted 70S ribosomes in vitro. Probably functions indirectly by altering the affinity of the ribosome for aminoacyl-tRNA, thus increasing their reactivity as acceptors for peptidyl transferase. The protein is Elongation factor P of Ehrlichia chaffeensis (strain ATCC CRL-10679 / Arkansas).